We begin with the raw amino-acid sequence, 325 residues long: MDKSSGELVTLTPNNNNTVQPVALMRLGVFVPTLKSLKNSKKNTLSRTDATEELTRLSLARAEGFDKVEITGPRLDMDNDFKTWVGIIHSFARHNVIGDKVELPFVEFAKLCGIPSSQSSRRLRERISPSLKRIAGTVISFSRTDEKHTREYITHLVQSAYYDTERDIVQLQADPRLFELYQFDRKVLLQLKAINALKRRESAQALYTFIESLPRDPAPISLARLRARLNLKSPVFSQNQTVRRAMEQLREIGYLDYTEIQRGRTKLFCIHYRRPRLKAPNDESKENPLPPSPAEKVSPEMAEKLALLEKLGITLDDLEKLFKSR.

The tract at residues 279-298 (APNDESKENPLPPSPAEKVS) is disordered.

It belongs to the initiator RepB protein family.

Its function is as follows. This protein is essential for plasmid replication; it is involved in copy control functions. In vitro, binds to the DNA repeat units, BCDD'D'', EFG and HIJ. The protein is RepFIB replication protein A (repA) of Escherichia coli.